A 336-amino-acid chain; its full sequence is tRNA(Ile)-lysidine synthase (336 aa).

ATP is bound at residue 32–37 (SGGQDS).

The protein belongs to the tRNA(Ile)-lysidine synthase family.

It is found in the cytoplasm. The enzyme catalyses cytidine(34) in tRNA(Ile2) + L-lysine + ATP = lysidine(34) in tRNA(Ile2) + AMP + diphosphate + H(+). Functionally, ligates lysine onto the cytidine present at position 34 of the AUA codon-specific tRNA(Ile) that contains the anticodon CAU, in an ATP-dependent manner. Cytidine is converted to lysidine, thus changing the amino acid specificity of the tRNA from methionine to isoleucine. The polypeptide is tRNA(Ile)-lysidine synthase (Synechococcus sp. (strain JA-3-3Ab) (Cyanobacteria bacterium Yellowstone A-Prime)).